A 420-amino-acid polypeptide reads, in one-letter code: Gamma-glutamyl phosphate reductase (420 aa).

Belongs to the gamma-glutamyl phosphate reductase family.

It is found in the cytoplasm. The catalysed reaction is L-glutamate 5-semialdehyde + phosphate + NADP(+) = L-glutamyl 5-phosphate + NADPH + H(+). It functions in the pathway amino-acid biosynthesis; L-proline biosynthesis; L-glutamate 5-semialdehyde from L-glutamate: step 2/2. Catalyzes the NADPH-dependent reduction of L-glutamate 5-phosphate into L-glutamate 5-semialdehyde and phosphate. The product spontaneously undergoes cyclization to form 1-pyrroline-5-carboxylate. The chain is Gamma-glutamyl phosphate reductase from Cereibacter sphaeroides (strain KD131 / KCTC 12085) (Rhodobacter sphaeroides).